The sequence spans 350 residues: Cobalt-precorrin-5B C(1)-methyltransferase (350 aa).

This sequence belongs to the CbiD family.

The catalysed reaction is Co-precorrin-5B + S-adenosyl-L-methionine = Co-precorrin-6A + S-adenosyl-L-homocysteine. It functions in the pathway cofactor biosynthesis; adenosylcobalamin biosynthesis; cob(II)yrinate a,c-diamide from sirohydrochlorin (anaerobic route): step 6/10. In terms of biological role, catalyzes the methylation of C-1 in cobalt-precorrin-5B to form cobalt-precorrin-6A. The sequence is that of Cobalt-precorrin-5B C(1)-methyltransferase from Syntrophotalea carbinolica (strain DSM 2380 / NBRC 103641 / GraBd1) (Pelobacter carbinolicus).